Here is a 505-residue protein sequence, read N- to C-terminus: AMP phosphorylase (505 aa).

AMP contacts are provided by residues Gly170, 196–201, and Thr205; that span reads SRAITS. Asp258 acts as the Proton donor in catalysis. The AMP site is built by Ser266 and Lys290.

This sequence belongs to the thymidine/pyrimidine-nucleoside phosphorylase family. Type 2 subfamily.

The enzyme catalyses AMP + phosphate = alpha-D-ribose 1,5-bisphosphate + adenine. The catalysed reaction is CMP + phosphate = cytosine + alpha-D-ribose 1,5-bisphosphate. It carries out the reaction UMP + phosphate = alpha-D-ribose 1,5-bisphosphate + uracil. Catalyzes the conversion of AMP and phosphate to adenine and ribose 1,5-bisphosphate (R15P). Exhibits phosphorylase activity toward CMP and UMP in addition to AMP. Functions in an archaeal AMP degradation pathway, together with R15P isomerase and RubisCO. The chain is AMP phosphorylase from Methanococcus maripaludis (strain DSM 14266 / JCM 13030 / NBRC 101832 / S2 / LL).